Reading from the N-terminus, the 213-residue chain is Peptidyl-tRNA hydrolase (213 aa).

TRNA is bound at residue Tyr26. His31 serves as the catalytic Proton acceptor. TRNA-binding residues include Tyr78, Asn80, and Asn126.

The protein belongs to the PTH family. As to quaternary structure, monomer.

The protein resides in the cytoplasm. The enzyme catalyses an N-acyl-L-alpha-aminoacyl-tRNA + H2O = an N-acyl-L-amino acid + a tRNA + H(+). Functionally, hydrolyzes ribosome-free peptidyl-tRNAs (with 1 or more amino acids incorporated), which drop off the ribosome during protein synthesis, or as a result of ribosome stalling. Its function is as follows. Catalyzes the release of premature peptidyl moieties from peptidyl-tRNA molecules trapped in stalled 50S ribosomal subunits, and thus maintains levels of free tRNAs and 50S ribosomes. This Trichormus variabilis (strain ATCC 29413 / PCC 7937) (Anabaena variabilis) protein is Peptidyl-tRNA hydrolase.